The sequence spans 441 residues: MPAMTPAFRRADLTGFLRTYGAALILLLAAMLAWQPAQAQLRVDISGTGATQYPVAIADFAVDDTHGRALAEVIRADLTRTGQFRLINAADSGLNVDSQVAHDDWRAKGADFLAYGSITRGPDGRYDVRYRLADTVKKGQLDGVAFSGTEQELRRVAHQIADRIYEKITGVRGVFSTRIAYVLKRGSTYELQVADADGQNPQVALRSREPIISPSWSPDGSRLAYVSFESGKPVVYVHTLATSARIPVANFKGNNSAPAWSPDGSQLAVALTRDGLSQIYIVSAGGGSNMRRITRSPGIDTEPNFTPDGRSIIFTSDRSGGPQIYQTGLDGGDARRLTFNGGYNISPRISPDGSTLLYVARRDGAFRIASLNLSSGSETLLTDGRDDQSPSFAPNGMQVLYAAIQNGRSVLAGVSSDRRVRQTLSVLNGEIREPTWGPFTR.

A signal peptide spans 1–39 (MPAMTPAFRRADLTGFLRTYGAALILLLAAMLAWQPAQA).

This sequence belongs to the TolB family. As to quaternary structure, the Tol-Pal system is composed of five core proteins: the inner membrane proteins TolA, TolQ and TolR, the periplasmic protein TolB and the outer membrane protein Pal. They form a network linking the inner and outer membranes and the peptidoglycan layer.

It localises to the periplasm. Functionally, part of the Tol-Pal system, which plays a role in outer membrane invagination during cell division and is important for maintaining outer membrane integrity. This is Tol-Pal system protein TolB from Bordetella parapertussis (strain 12822 / ATCC BAA-587 / NCTC 13253).